The primary structure comprises 127 residues: Large ribosomal subunit protein bL20 (127 aa).

The protein belongs to the bacterial ribosomal protein bL20 family.

Its function is as follows. Binds directly to 23S ribosomal RNA and is necessary for the in vitro assembly process of the 50S ribosomal subunit. It is not involved in the protein synthesizing functions of that subunit. The protein is Large ribosomal subunit protein bL20 of Bifidobacterium animalis subsp. lactis (strain AD011).